Consider the following 126-residue polypeptide: Holo-[acyl-carrier-protein] synthase (126 aa).

Residues aspartate 8 and glutamate 57 each coordinate Mg(2+).

This sequence belongs to the P-Pant transferase superfamily. AcpS family. It depends on Mg(2+) as a cofactor.

It is found in the cytoplasm. The enzyme catalyses apo-[ACP] + CoA = holo-[ACP] + adenosine 3',5'-bisphosphate + H(+). Its function is as follows. Transfers the 4'-phosphopantetheine moiety from coenzyme A to a Ser of acyl-carrier-protein. This Leptospira interrogans serogroup Icterohaemorrhagiae serovar copenhageni (strain Fiocruz L1-130) protein is Holo-[acyl-carrier-protein] synthase.